The chain runs to 126 residues: Copper resistance protein C (126 aa).

Residues 1-24 (MLLNRTSFVTLFAAGMLVSALAQA) form the signal peptide. His-25 contacts Cu(2+). 5 residues coordinate Cu(+): Met-64, Met-67, Met-70, His-72, and Met-75. His-115 serves as a coordination point for Cu(2+).

The protein belongs to the CopC family. Monomer.

Its subcellular location is the periplasm. The redox state of copper bound to CopC may act as a switch between the possible trafficking pathways of the metal ion. Copper-binding protein involved in copper resistance and homeostasis. Probably mediates copper resistance by sequestering the excess of copper in the periplasm. May act as a copper carrier in the oxidizing periplasmic space that exchanges either Cu(I) or Cu(II) with its putative partners CopA, CopB and CopD. The sequence is that of Copper resistance protein C from Pseudomonas syringae pv. tomato.